We begin with the raw amino-acid sequence, 206 residues long: Ribonuclease M5 (206 aa).

Positions 8-91 constitute a Toprim domain; sequence NEVIVVEGRD…AFLNRDEARP (84 aa). Glutamate 14, aspartate 60, and aspartate 62 together coordinate Mg(2+).

It belongs to the ribonuclease M5 family. The cofactor is Mg(2+).

The protein localises to the cytoplasm. It carries out the reaction Endonucleolytic cleavage of RNA, removing 21 and 42 nucleotides, respectively, from the 5'- and 3'-termini of a 5S-rRNA precursor.. In terms of biological role, required for correct processing of both the 5' and 3' ends of 5S rRNA precursor. Cleaves both sides of a double-stranded region yielding mature 5S rRNA in one step. In Lactococcus lactis subsp. lactis (strain IL1403) (Streptococcus lactis), this protein is Ribonuclease M5.